The primary structure comprises 397 residues: MAKAKFERTKPHVNIGTIGHIDHGKTTLTAAITKVLHDKYPDLNPFTPFEDIDKAPEERERGITISISHVEYQTESRHYAHVDCPGHADYVKNMITGAAQMDGAILVVAATDGPMPQTKEHVLLARQVGVPYIVVALNKSDMVDDEEIFDLVELEVRELLNEYEFPGDEVPVIRVSALKALEGDPEWGKKILELMEAVDQNIPEPQRDIDKPFLMPIEDVFSITGRGTVVTGRIERGVINVNDTVEIVGLKDDKITTTVTGVEMFRKLLDQGQAGDNVGLLLRGVKREEVERGQVVIKPGTTTPHTEFEAQVVILSKDEGGRHTPFFNNYRPQFYFRTTDVTGVVTLPEGTEMVMPGDNTSMTVKLIQPVAMEEGLKFAIREGGRTVGAGRVTKIIK.

Positions 10–206 (KPHVNIGTIG…AVDQNIPEPQ (197 aa)) constitute a tr-type G domain. Positions 19-26 (GHIDHGKT) are G1. 19–26 (GHIDHGKT) contacts GTP. Mg(2+) is bound at residue Thr26. The G2 stretch occupies residues 62–66 (GITIS). The segment at 83–86 (DCPG) is G3. Residues 83 to 87 (DCPGH) and 138 to 141 (NKSD) contribute to the GTP site. The G4 stretch occupies residues 138–141 (NKSD). The segment at 176–178 (SAL) is G5.

Belongs to the TRAFAC class translation factor GTPase superfamily. Classic translation factor GTPase family. EF-Tu/EF-1A subfamily. Monomer.

The protein localises to the cytoplasm. The enzyme catalyses GTP + H2O = GDP + phosphate + H(+). Its function is as follows. GTP hydrolase that promotes the GTP-dependent binding of aminoacyl-tRNA to the A-site of ribosomes during protein biosynthesis. This chain is Elongation factor Tu, found in Thermobifida fusca (strain YX).